Here is a 127-residue protein sequence, read N- to C-terminus: RxLR effector protein CRE6 (127 aa).

The N-terminal stretch at 1 to 19 (MIRNALLVLVFVLIGTISA) is a signal peptide. A RxLR-dEER motif is present at residues 48 to 67 (RLLRQGSVKEGGVHDATEER).

This sequence belongs to the RxLR effector family.

It localises to the secreted. The protein resides in the host cell. In terms of biological role, effector that is involved in host plant infection. Contributes to virulence during the early infection stage, by inhibiting plant defense responses induced by both PAMP-triggered immunity (PTI) and effector-triggered immunity (ETI). The protein is RxLR effector protein CRE6 of Phytophthora infestans (strain T30-4) (Potato late blight agent).